The primary structure comprises 549 residues: Lysine-specific demethylase JMJ31 (549 aa).

The JmjC domain occupies 125–296; the sequence is DYRPGQIYLA…SNMPEHMDSY (172 aa). Residues histidine 184, aspartate 186, and histidine 266 each contribute to the Fe cation site.

It belongs to the JARID1 histone demethylase family. Fe(2+) is required as a cofactor. In terms of tissue distribution, mostly expressed in leaves and inflorescences, and, to a lower extent, in roots, siliques and stems.

It localises to the nucleus. Functionally, may function as histone H3 lysine demethylase and be involved in regulation of gene expression. This Arabidopsis thaliana (Mouse-ear cress) protein is Lysine-specific demethylase JMJ31.